The primary structure comprises 362 residues: Glycyl-glycine endopeptidase ALE-1 (362 aa).

An N-terminal signal peptide occupies residues 1–35 (MDTNRKFTLVKSLSIGLGTFLVGSVFLTVNDEASA). The interval 35–110 (ASTKVDAPKV…PAKADAPKVE (76 aa)) is disordered. Basic and acidic residues predominate over residues 40–110 (DAPKVEQEAP…PAKADAPKVE (71 aa)). Positions 150 and 154 each coordinate Zn(2+). The active site involves H231. H233 contributes to the Zn(2+) binding site. One can recognise an SH3b domain in the interval 282–350 (SESASFTANT…YLPVRTWNES (69 aa)).

This sequence belongs to the peptidase M23B family. It depends on Zn(2+) as a cofactor.

It is found in the secreted. The enzyme catalyses Hydrolysis of the -Gly-|-Gly- bond in the pentaglycine inter-peptide link joining staphylococcal cell wall peptidoglycans.. Lyses staphylococcal cells by hydrolyzing the polyglycine interpeptide bridges of the peptidoglycan. In Staphylococcus capitis, this protein is Glycyl-glycine endopeptidase ALE-1.